Reading from the N-terminus, the 450-residue chain is MMCGLEIHVQLETESKLFCDCPTNYKEAPANSNICPVCLNQPGAKPYPTNEKAIENALMISLMLNCKIDKGFTYFMRKHYDYPDLPSGYQRTSVPIGYEGELNGVRIREIHMEEDPGQYKPDRGTVDFNRSGIPLIEIVTEPDIKSPEEARTFLKELIRVLQYSGGARGEGTMRADVNISIEGGNRVEMKNINSIKGAYKALKFELVRQKNLMKRGVEIKQETRAYLESQMITVGMRLKEDADDYRFIPDPDLPPMEISDAQIENVLEIMPEAPHNKVRRFTEEYGIDAESAKVLTSELDLAIAYEAVAKQVDPKFASMWMRDELKRVLSYNKLDFADSGILVEDIVELLEMLQNKEITTKAGQRIIEHMPNNKQTPKAIAEELGLLGVVKDDEVIAAVKQAIEENPKAVNDYLEGQKSSLNFLVGQVMRLTRGKADPGETVKILKENIE.

It belongs to the GatB/GatE family. GatB subfamily. In terms of assembly, heterotrimer of A, B and C subunits.

The enzyme catalyses L-glutamyl-tRNA(Gln) + L-glutamine + ATP + H2O = L-glutaminyl-tRNA(Gln) + L-glutamate + ADP + phosphate + H(+). The catalysed reaction is L-aspartyl-tRNA(Asn) + L-glutamine + ATP + H2O = L-asparaginyl-tRNA(Asn) + L-glutamate + ADP + phosphate + 2 H(+). Its function is as follows. Allows the formation of correctly charged Asn-tRNA(Asn) or Gln-tRNA(Gln) through the transamidation of misacylated Asp-tRNA(Asn) or Glu-tRNA(Gln) in organisms which lack either or both of asparaginyl-tRNA or glutaminyl-tRNA synthetases. The reaction takes place in the presence of glutamine and ATP through an activated phospho-Asp-tRNA(Asn) or phospho-Glu-tRNA(Gln). This is Aspartyl/glutamyl-tRNA(Asn/Gln) amidotransferase subunit B from Methanobrevibacter smithii (strain ATCC 35061 / DSM 861 / OCM 144 / PS).